A 235-amino-acid polypeptide reads, in one-letter code: Secreted RxLR effector protein 27 (235 aa).

A signal peptide spans 1 to 25 (MTNLFTRHTRRSLTALALLSGGVYA). A RxLR-dEER motif is present at residues 36–60 (RSLRVFVTGGQVLWDYRIHFKGIER).

The protein belongs to the RxLR effector family.

It is found in the secreted. The protein localises to the host cytoplasm. It localises to the host nucleus. Functionally, effector that acts as a broad suppressor of cell death to interrupt plant immunity. Inhibits cell death induced by cell death-inducing proteins, including the PAMP elicitor INF1 from P.infestans. The protein is Secreted RxLR effector protein 27 of Plasmopara viticola (Downy mildew of grapevine).